A 486-amino-acid polypeptide reads, in one-letter code: Retrograde regulation protein 3 (486 aa).

Positions 27–35 (ETLDFSLVT) match the 9aaTAD 1 motif. Polar residues-rich tracts occupy residues 75-94 (NNNL…TAST) and 101-130 (SQSS…IGQG). Residues 75–130 (NNNLMGSQARSNSQTPTASTIYEEAESQSSYLDDMFRTSQGGRPVTQNSISSIGQG) are disordered. Phosphoserine occurs at positions 81, 123, and 142. Thr-150 bears the Phosphothreonine mark. Positions 189 to 197 (SSINSDMMT) match the 9aaTAD 2 motif. Phosphoserine is present on residues Ser-227, Ser-236, and Ser-241. The tract at residues 243 to 274 (RHGSINTPRTRHTSISSNMTENIGPGSVPKIL) is disordered. The span at 246–263 (SINTPRTRHTSISSNMTE) shows a compositional bias: polar residues. At Ser-269 the chain carries Phosphoserine. Positions 285–344 (RKREFHNAVERRRRELIKQKIKELGQLVPPSLLNYDDLGKQIKPNKGIILDRTVEYLQYL) constitute a bHLH domain. Positions 374–395 (ALSPFTNNHHASSGQNNSENSE) are disordered.

Binds DNA as a heterodimer with RTG1.

Its subcellular location is the nucleus. Its function is as follows. Transcription factor that regulates CIT2 gene expression. Binds to two identical sites oriented as inverted repeats 28 bp apart in a regulatory upstream activation sequence element (UASR) in the CIT2 promoter. The core binding site is 5'-GGTCAC-3'. In Saccharomyces cerevisiae (strain ATCC 204508 / S288c) (Baker's yeast), this protein is Retrograde regulation protein 3 (RTG3).